A 148-amino-acid polypeptide reads, in one-letter code: Deoxyuridine 5'-triphosphate nucleotidohydrolase (148 aa).

Residues 68-70 (RSG), Asn81, 85-87 (TID), and Lys95 each bind substrate.

Belongs to the dUTPase family. It depends on Mg(2+) as a cofactor.

The enzyme catalyses dUTP + H2O = dUMP + diphosphate + H(+). The protein operates within pyrimidine metabolism; dUMP biosynthesis; dUMP from dCTP (dUTP route): step 2/2. In terms of biological role, this enzyme is involved in nucleotide metabolism: it produces dUMP, the immediate precursor of thymidine nucleotides and it decreases the intracellular concentration of dUTP so that uracil cannot be incorporated into DNA. In Rickettsia conorii (strain ATCC VR-613 / Malish 7), this protein is Deoxyuridine 5'-triphosphate nucleotidohydrolase.